A 211-amino-acid chain; its full sequence is Ribosomal RNA large subunit methyltransferase E (211 aa).

S-adenosyl-L-methionine contacts are provided by Gly-55, Trp-57, Asp-75, Asp-93, and Asp-117. The active-site Proton acceptor is the Lys-157.

Belongs to the class I-like SAM-binding methyltransferase superfamily. RNA methyltransferase RlmE family.

The protein localises to the cytoplasm. The catalysed reaction is uridine(2552) in 23S rRNA + S-adenosyl-L-methionine = 2'-O-methyluridine(2552) in 23S rRNA + S-adenosyl-L-homocysteine + H(+). Its function is as follows. Specifically methylates the uridine in position 2552 of 23S rRNA at the 2'-O position of the ribose in the fully assembled 50S ribosomal subunit. The polypeptide is Ribosomal RNA large subunit methyltransferase E (Methanothermobacter thermautotrophicus (strain ATCC 29096 / DSM 1053 / JCM 10044 / NBRC 100330 / Delta H) (Methanobacterium thermoautotrophicum)).